The sequence spans 251 residues: MNAKIIDISGNPVGEIVLPAIFDEEYRPDLIKRAVLAAQANRLQPYGPHFYAGMNTSARSWGPGHGVSRVPRIVTGRRAAAVPMARGGRASHPPVPSKVLSEKINEKERIKAIRSAVAATAKPDIVAARGHLFSGELPIVVRGEIESISKTSELRRFLMAAGLWDDVMRAKNGRKVRAGKGKIRGRRFRQPRSILIVAAADNGIGRAARNLPGVDFVTADRLNAELLAPGTHAGRLTVWSEPSLKVLEERL.

Belongs to the universal ribosomal protein uL4 family. As to quaternary structure, part of the 50S ribosomal subunit.

In terms of biological role, one of the primary rRNA binding proteins, this protein initially binds near the 5'-end of the 23S rRNA. It is important during the early stages of 50S assembly. It makes multiple contacts with different domains of the 23S rRNA in the assembled 50S subunit and ribosome. Functionally, forms part of the polypeptide exit tunnel. This Methanothrix thermoacetophila (strain DSM 6194 / JCM 14653 / NBRC 101360 / PT) (Methanosaeta thermophila) protein is Large ribosomal subunit protein uL4.